The following is a 126-amino-acid chain: Large ribosomal subunit protein uL22 (126 aa).

The protein belongs to the universal ribosomal protein uL22 family. As to quaternary structure, part of the 50S ribosomal subunit.

Its function is as follows. This protein binds specifically to 23S rRNA; its binding is stimulated by other ribosomal proteins, e.g. L4, L17, and L20. It is important during the early stages of 50S assembly. It makes multiple contacts with different domains of the 23S rRNA in the assembled 50S subunit and ribosome. Functionally, the globular domain of the protein is located near the polypeptide exit tunnel on the outside of the subunit, while an extended beta-hairpin is found that lines the wall of the exit tunnel in the center of the 70S ribosome. The polypeptide is Large ribosomal subunit protein uL22 (Prochlorococcus marinus (strain NATL2A)).